A 1162-amino-acid polypeptide reads, in one-letter code: Spike glycoprotein (1162 aa).

The signal sequence occupies residues 1-18 (MLVTPLLLVTLLCALCSA). At 19-1095 (ALYDSSSYVY…LKTYIKWPWY (1077 aa)) the chain is on the extracellular side. N-linked (GlcNAc...) asparagine; by host glycosylation is found at Asn-51, Asn-77, Asn-103, Asn-144, Asn-163, Asn-178, Asn-212, Asn-237, Asn-247, Asn-264, Asn-271, Asn-276, Asn-306, Asn-425, Asn-447, Asn-513, Asn-530, Asn-579, Asn-591, Asn-669, Asn-676, and Asn-714. The interval 769 to 874 (IPFATQLQAR…QVDRLITGRL (106 aa)) is heptad repeat 1 (HR1). Residues 822–866 (QDVVNKQSAILTETMASLNKNFGAISSVIQEIYLQLDAIQANAQV) adopt a coiled-coil conformation. N-linked (GlcNAc...) asparagine; by host glycans are attached at residues Asn-947, Asn-960, Asn-979, Asn-1014, Asn-1051, Asn-1058, and Asn-1074. The tract at residues 1024–1105 (NDDFDFDDEL…VWLAIAFATI (82 aa)) is heptad repeat 2 (HR2). Positions 1055–1083 (PVLNITYDIDKIEEVIKGLNDSLIDLETL) form a coiled coil. A helical membrane pass occupies residues 1096–1116 (VWLAIAFATIIFILILGWVFF). The Cytoplasmic segment spans residues 1117–1162 (MTGCCGCCCGCFGIIPLMSKCGKKSSYYTTFDNDVVTEQYRPKKSV). The Di-lysine motif motif lies at 1159-1162 (KKSV).

The protein belongs to the gammacoronaviruses spike protein family. Homotrimer; each monomer consists of a S1 and a S2 subunit. The resulting peplomers protrude from the virus surface as spikes. Post-translationally, specific enzymatic cleavages in vivo yield mature proteins. The precursor is processed into S1 and S2 by host cell furin or furin-like protease to yield the mature S1 and S2 proteins. The cleavage site between S1 and S2 requires the optimal sequence [KR]-X-[KR]-R. Additionally, a second cleavage leads to the release of a fusion peptide after viral attachment to host cell receptor.

It is found in the virion membrane. It localises to the host endoplasmic reticulum-Golgi intermediate compartment membrane. Its function is as follows. Attaches the virion to the host cell membrane by interacting with sialic acids, initiating the infection. In terms of biological role, mediates fusion of the virion and cellular membranes by acting as a class I viral fusion protein. Under the current model, the protein has at least 3 conformational states: pre-fusion native state, pre-hairpin intermediate state, and post-fusion hairpin state. During viral and target cell membrane fusion, the coiled coil regions (heptad repeats) assume a trimer-of-hairpins structure, positioning the fusion peptide in close proximity to the C-terminal region of the ectodomain. The formation of this structure appears to drive apposition and subsequent fusion of viral and target cell membranes. Acts as a viral fusion peptide after S2 cleavage occurring upon virus endocytosis. This chain is Spike glycoprotein, found in Avian infectious bronchitis virus (strain KB8523) (IBV).